Here is a 369-residue protein sequence, read N- to C-terminus: Putative agmatine deiminase 2 (369 aa).

Cys356 (amidino-cysteine intermediate) is an active-site residue.

The protein belongs to the agmatine deiminase family.

The catalysed reaction is agmatine + H2O = N-carbamoylputrescine + NH4(+). The polypeptide is Putative agmatine deiminase 2 (Listeria monocytogenes serovar 1/2a (strain ATCC BAA-679 / EGD-e)).